The primary structure comprises 209 residues: Methylthioribulose-1-phosphate dehydratase (209 aa).

Zn(2+) is bound by residues histidine 98 and histidine 100.

The protein belongs to the aldolase class II family. MtnB subfamily. As to quaternary structure, homotetramer. Zn(2+) serves as cofactor.

The enzyme catalyses 5-(methylsulfanyl)-D-ribulose 1-phosphate = 5-methylsulfanyl-2,3-dioxopentyl phosphate + H2O. It participates in amino-acid biosynthesis; L-methionine biosynthesis via salvage pathway; L-methionine from S-methyl-5-thio-alpha-D-ribose 1-phosphate: step 2/6. Catalyzes the dehydration of methylthioribulose-1-phosphate (MTRu-1-P) into 2,3-diketo-5-methylthiopentyl-1-phosphate (DK-MTP-1-P). The sequence is that of Methylthioribulose-1-phosphate dehydratase (mtnB) from Bacillus subtilis (strain 168).